The following is a 142-amino-acid chain: uncharacterized protein (142 aa).

This is an uncharacterized protein from Saccharomyces cerevisiae (strain ATCC 204508 / S288c) (Baker's yeast).